The chain runs to 195 residues: ATP-dependent Clp protease proteolytic subunit (195 aa).

The active-site Nucleophile is S98. Residue H123 is part of the active site.

This sequence belongs to the peptidase S14 family. As to quaternary structure, fourteen ClpP subunits assemble into 2 heptameric rings which stack back to back to give a disk-like structure with a central cavity, resembling the structure of eukaryotic proteasomes.

It is found in the cytoplasm. The enzyme catalyses Hydrolysis of proteins to small peptides in the presence of ATP and magnesium. alpha-casein is the usual test substrate. In the absence of ATP, only oligopeptides shorter than five residues are hydrolyzed (such as succinyl-Leu-Tyr-|-NHMec, and Leu-Tyr-Leu-|-Tyr-Trp, in which cleavage of the -Tyr-|-Leu- and -Tyr-|-Trp bonds also occurs).. Its function is as follows. Cleaves peptides in various proteins in a process that requires ATP hydrolysis. Has a chymotrypsin-like activity. Plays a major role in the degradation of misfolded proteins. In Staphylococcus haemolyticus (strain JCSC1435), this protein is ATP-dependent Clp protease proteolytic subunit.